The chain runs to 168 residues: Photosystem I assembly protein Ycf3 (168 aa).

3 TPR repeats span residues 35–68, 72–105, and 120–153; these read AFTY…EIDP, SYIL…NPFL, and GEQA…TPGN.

This sequence belongs to the Ycf3 family.

The protein resides in the plastid. The protein localises to the chloroplast thylakoid membrane. Its function is as follows. Essential for the assembly of the photosystem I (PSI) complex. May act as a chaperone-like factor to guide the assembly of the PSI subunits. The protein is Photosystem I assembly protein Ycf3 of Acorus calamus var. americanus (American sweet flag).